A 217-amino-acid chain; its full sequence is tRNA (guanine-N(7)-)-methyltransferase (217 aa).

E44, E69, N96, and D118 together coordinate S-adenosyl-L-methionine. Residue D118 is part of the active site. K122 provides a ligand contact to substrate. Positions R124 to R129 are interaction with RNA. Residues D154 and T191–E194 each bind substrate.

It belongs to the class I-like SAM-binding methyltransferase superfamily. TrmB family.

It catalyses the reaction guanosine(46) in tRNA + S-adenosyl-L-methionine = N(7)-methylguanosine(46) in tRNA + S-adenosyl-L-homocysteine. Its pathway is tRNA modification; N(7)-methylguanine-tRNA biosynthesis. In terms of biological role, catalyzes the formation of N(7)-methylguanine at position 46 (m7G46) in tRNA. This is tRNA (guanine-N(7)-)-methyltransferase from Geobacillus kaustophilus (strain HTA426).